Here is a 233-residue protein sequence, read N- to C-terminus: Eukaryotic translation initiation factor 4E-1 (233 aa).

The disordered stretch occupies residues 1-51 (MVVEDALKTSASEDQAKTETNPKPREEDDEPEEGEIVGDEESASKPSKGIA). A compositionally biased stretch (basic and acidic residues) spans 14-26 (DQAKTETNPKPRE). The segment covering 27–41 (EDDEPEEGEIVGDEE) has biased composition (acidic residues). EIF4G-binding stretches follow at residues 55–58 (HALE) and 65–104 (FDSP…NNIR). MRNA-binding positions include 76–81 (KQEDWG), K108, and 126–127 (WE). C131 and C169 form a disulfide bridge. The EIF4G-binding stretch occupies residues 152-161 (YTLLGMIGEQ). MRNA is bound by residues 176 to 181 (RNRQEK) and 221 to 225 (MRHER).

Belongs to the eukaryotic initiation factor 4E family. In terms of assembly, EIF4F is a multi-subunit complex, the composition of which varies with external and internal environmental conditions. It is composed of at least EIF4A, EIF4E and EIF4G. EIF4E is also known to interact with other partners. In higher plants two isoforms of EIF4F have been identified, named isoform EIF4F and isoform EIF(iso)4F. Isoform EIF4F has subunits p220 and p26, whereas isoform EIF(iso)4F has subunits p82 and p28. As to quaternary structure, (Microbial infection) Does not interact with the VPg of Plum pox virus (PPV) strain D. According to the redox status, the Cys-131-Cys-169 disulfide bridge may have a role in regulating protein function by affecting its ability to bind capped mRNA. Mostly expressed in leaves, flower buds, leaf buds and anthers, to a lower extent in roots, stems and green immature fruit, and, at low levels, in petals.

It is found in the nucleus. It localises to the cytoplasm. In terms of biological role, component of the protein complex eIF4F, which is involved in the recognition of the mRNA cap, ATP-dependent unwinding of 5'-terminal secondary structure and recruitment of mRNA to the ribosome. Recognizes and binds the 7-methylguanosine-containing mRNA cap during an early step in the initiation of protein synthesis and facilitates ribosome binding by inducing the unwinding of the mRNAs secondary structures. Functionally, (Microbial infection) Not involved in the plum pox virus (PPV) strain D infection process. The chain is Eukaryotic translation initiation factor 4E-1 from Prunus domestica (Garden plum).